An 834-amino-acid chain; its full sequence is ATP-dependent DNA helicase fml1 (834 aa).

One can recognise a Helicase ATP-binding domain in the interval 80–248; it reads IVQKALFENV…NVIDSLHISR (169 aa). Residue 93–100 coordinates ATP; the sequence is LPTGLGKT. Positions 196-199 match the DEAH box motif; sequence DEAH. Residues 416–582 enclose the Helicase C-terminal domain; it reads HLERIVTEYF…GLSLSEKSYR (167 aa). An interaction with MHF complex region spans residues 650 to 690; that stretch reads EESPFEICPVTYSIEQEKKLEKYKRVCLRGLDIHRNRRLSQ. The segment at 738–769 is disordered; sequence NSTDRDTKQPKMHDFRQPLHPNPMTTLKRKGQ. The span at 740–754 shows a compositional bias: basic and acidic residues; that stretch reads TDRDTKQPKMHDFRQ.

The protein belongs to the DEAD box helicase family. DEAH subfamily. FANCM sub-subfamily.

It localises to the cytoplasm. It is found in the nucleus. Its subcellular location is the nucleolus. The catalysed reaction is ATP + H2O = ADP + phosphate + H(+). Its function is as follows. ATP-dependent DNA helicase involved in DNA damage repair by homologous recombination and in genome maintenance. Capable of unwinding D-loops. Plays a role in limiting crossover recombination during mitotic DNA double-strand break (DSB) repair. Component of a FANCM-MHF complex which promotes gene conversion at blocked replication forks, probably by reversal of the stalled fork. FANCM-MHF also promotes non-crossover recombination in meiotic cells. The polypeptide is ATP-dependent DNA helicase fml1 (Schizosaccharomyces pombe (strain 972 / ATCC 24843) (Fission yeast)).